The sequence spans 662 residues: Methionine--tRNA ligase (662 aa).

A 'HIGH' region motif is present at residues 13–23 (PYTNGPCHLGH). Positions 144, 147, 156, and 160 each coordinate Zn(2+). Positions 326–330 (KFSKS) match the 'KMSKS' region motif. Residue lysine 329 participates in ATP binding. Residues 564–662 (DFSKVEIKTG…KPVEPGTKIR (99 aa)) form the tRNA-binding domain.

It belongs to the class-I aminoacyl-tRNA synthetase family. MetG type 1 subfamily. As to quaternary structure, homodimer. Zn(2+) serves as cofactor.

The protein resides in the cytoplasm. It catalyses the reaction tRNA(Met) + L-methionine + ATP = L-methionyl-tRNA(Met) + AMP + diphosphate. In terms of biological role, is required not only for elongation of protein synthesis but also for the initiation of all mRNA translation through initiator tRNA(fMet) aminoacylation. In Methanoregula boonei (strain DSM 21154 / JCM 14090 / 6A8), this protein is Methionine--tRNA ligase.